The following is a 288-amino-acid chain: Bifunctional protein FolD (288 aa).

NADP(+) is bound by residues 166-168 (GAS) and Ile232.

Belongs to the tetrahydrofolate dehydrogenase/cyclohydrolase family. As to quaternary structure, homodimer.

The catalysed reaction is (6R)-5,10-methylene-5,6,7,8-tetrahydrofolate + NADP(+) = (6R)-5,10-methenyltetrahydrofolate + NADPH. It catalyses the reaction (6R)-5,10-methenyltetrahydrofolate + H2O = (6R)-10-formyltetrahydrofolate + H(+). Its pathway is one-carbon metabolism; tetrahydrofolate interconversion. In terms of biological role, catalyzes the oxidation of 5,10-methylenetetrahydrofolate to 5,10-methenyltetrahydrofolate and then the hydrolysis of 5,10-methenyltetrahydrofolate to 10-formyltetrahydrofolate. The protein is Bifunctional protein FolD of Cronobacter sakazakii (strain ATCC BAA-894) (Enterobacter sakazakii).